Reading from the N-terminus, the 109-residue chain is Cytochrome bo(3) ubiquinol oxidase subunit 4 (109 aa).

Residues 1-17 (MSHSTDHSGASHGSVKT) are Cytoplasmic-facing. Residues 18 to 36 (YMTGFILSIILTVIPFWMV) form a helical membrane-spanning segment. At 37 to 45 (MTGAASPAV) the chain is on the periplasmic side. Residues 46–64 (ILGTILAMAVVQVLVHLVC) form a helical membrane-spanning segment. Residues 65–80 (FLHMNTKSDEGWNMTA) are Cytoplasmic-facing. Residues 81–99 (FVFTVLIIAILVVGSIWIM) form a helical membrane-spanning segment. Residues 100–109 (WNLNYNMMMH) lie on the Periplasmic side of the membrane.

The protein belongs to the cytochrome c oxidase bacterial subunit 4 family. In terms of assembly, heterooctamer of two A chains, two B chains, two C chains and two D chains.

The protein resides in the cell inner membrane. Its function is as follows. Cytochrome bo(3) ubiquinol terminal oxidase is the component of the aerobic respiratory chain of E.coli that predominates when cells are grown at high aeration. Has proton pump activity across the membrane in addition to electron transfer, pumping 2 protons/electron. The chain is Cytochrome bo(3) ubiquinol oxidase subunit 4 (cyoD) from Escherichia coli O157:H7.